Consider the following 176-residue polypeptide: NAD(P)H-quinone oxidoreductase subunit 6, chloroplastic (176 aa).

Transmembrane regions (helical) follow at residues isoleucine 10–threonine 30, isoleucine 33–leucine 53, valine 60–phenylalanine 80, isoleucine 95–isoleucine 115, and phenylalanine 152–threonine 172.

This sequence belongs to the complex I subunit 6 family. NDH is composed of at least 16 different subunits, 5 of which are encoded in the nucleus.

It is found in the plastid. Its subcellular location is the chloroplast thylakoid membrane. It catalyses the reaction a plastoquinone + NADH + (n+1) H(+)(in) = a plastoquinol + NAD(+) + n H(+)(out). It carries out the reaction a plastoquinone + NADPH + (n+1) H(+)(in) = a plastoquinol + NADP(+) + n H(+)(out). Functionally, NDH shuttles electrons from NAD(P)H:plastoquinone, via FMN and iron-sulfur (Fe-S) centers, to quinones in the photosynthetic chain and possibly in a chloroplast respiratory chain. The immediate electron acceptor for the enzyme in this species is believed to be plastoquinone. Couples the redox reaction to proton translocation, and thus conserves the redox energy in a proton gradient. The chain is NAD(P)H-quinone oxidoreductase subunit 6, chloroplastic (ndhG) from Brachypodium distachyon (Purple false brome).